Consider the following 345-residue polypeptide: Adenine deaminase (345 aa).

Residues His-20, His-22, and His-204 each contribute to the Zn(2+) site. Glu-207 serves as the catalytic Proton donor. Asp-285 contributes to the Zn(2+) binding site. Asp-286 serves as a coordination point for substrate.

It belongs to the metallo-dependent hydrolases superfamily. Adenosine and AMP deaminases family. Adenine deaminase type 2 subfamily. Requires Zn(2+) as cofactor.

The catalysed reaction is adenine + H2O + H(+) = hypoxanthine + NH4(+). Catalyzes the hydrolytic deamination of adenine to hypoxanthine. Plays an important role in the purine salvage pathway and in nitrogen catabolism. In Ralstonia nicotianae (strain ATCC BAA-1114 / GMI1000) (Ralstonia solanacearum), this protein is Adenine deaminase.